Consider the following 351-residue polypeptide: Glycerol-1-phosphate dehydrogenase [NAD(P)+] (351 aa).

NAD(+) contacts are provided by residues 93 to 97 (GKVLD) and 115 to 118 (TTAS). Position 120 (Asp-120) interacts with substrate. Ser-124 provides a ligand contact to NAD(+). Asp-167 is a binding site for substrate. 2 residues coordinate Zn(2+): Asp-167 and His-247. His-251 provides a ligand contact to substrate. His-263 is a binding site for Zn(2+).

The protein belongs to the glycerol-1-phosphate dehydrogenase family. Zn(2+) is required as a cofactor.

The protein resides in the cytoplasm. It carries out the reaction sn-glycerol 1-phosphate + NAD(+) = dihydroxyacetone phosphate + NADH + H(+). The enzyme catalyses sn-glycerol 1-phosphate + NADP(+) = dihydroxyacetone phosphate + NADPH + H(+). It functions in the pathway membrane lipid metabolism; glycerophospholipid metabolism. Catalyzes the NAD(P)H-dependent reduction of dihydroxyacetonephosphate (DHAP or glycerone phosphate) to glycerol 1-phosphate (G1P). The G1P thus generated is used as the glycerophosphate backbone of phospholipids in the cellular membranes of Archaea. This is Glycerol-1-phosphate dehydrogenase [NAD(P)+] from Archaeoglobus fulgidus (strain ATCC 49558 / DSM 4304 / JCM 9628 / NBRC 100126 / VC-16).